The following is a 98-amino-acid chain: MDARDIILRPVVTEKSMNLMDDKKYTFDVLVSATKTQVRNAIEEIFDVKVKNVNIMNVRGKEKRVGRYTGKTARRRKAIVTLTEDSNDIKIFNDNKEN.

Belongs to the universal ribosomal protein uL23 family. Part of the 50S ribosomal subunit. Contacts protein L29, and trigger factor when it is bound to the ribosome.

One of the early assembly proteins it binds 23S rRNA. One of the proteins that surrounds the polypeptide exit tunnel on the outside of the ribosome. Forms the main docking site for trigger factor binding to the ribosome. The protein is Large ribosomal subunit protein uL23 of Lactobacillus johnsonii (strain CNCM I-12250 / La1 / NCC 533).